The following is a 318-amino-acid chain: NADH-ubiquinone oxidoreductase chain 1 (318 aa).

The next 8 membrane-spanning stretches (helical) occupy residues 2–22 (FMLN…FLTL), 68–88 (ITMF…MWIP), 100–120 (LGVL…LWSG), 147–167 (AIIL…TLII), 171–191 (YIWL…STLA), 217–237 (GGPF…MNAL), 254–273 (LYTT…FLWI), and 294–314 (LPLT…MAGI).

It belongs to the complex I subunit 1 family.

The protein localises to the mitochondrion inner membrane. The enzyme catalyses a ubiquinone + NADH + 5 H(+)(in) = a ubiquinol + NAD(+) + 4 H(+)(out). Its function is as follows. Core subunit of the mitochondrial membrane respiratory chain NADH dehydrogenase (Complex I) that is believed to belong to the minimal assembly required for catalysis. Complex I functions in the transfer of electrons from NADH to the respiratory chain. The immediate electron acceptor for the enzyme is believed to be ubiquinone. The sequence is that of NADH-ubiquinone oxidoreductase chain 1 (MT-ND1) from Hsunycteris thomasi (Thomas's nectar bat).